The primary structure comprises 352 residues: Aspartic protease Bla g 2 (352 aa).

The first 19 residues, 1–19 (MIGLKLVTVLFAVATITHA), serve as a signal peptide directing secretion. A propeptide spans 20 to 24 (AELQR) (removed in mature form). Residues 39-346 (YAGITKIGNQ…NWENKTMGFG (308 aa)) form the Peptidase A1 domain. D55 is an active-site residue. Intrachain disulfides connect C59/C151, C68/C73, and C75/C136. N-linked (GlcNAc...) asparagine glycosylation is present at N117. The Zn(2+) site is built by H178 and H186. D239 is a catalytic residue. 2 disulfide bridges follow: C261/C272 and C276/C309. Residue N295 is glycosylated (N-linked (GlcNAc...) asparagine). Positions 326 and 330 each coordinate Zn(2+). Residue N340 is glycosylated (N-linked (GlcNAc...) asparagine).

Belongs to the peptidase A1 family. Homodimer.

Functionally, functions as a digestive enzyme in the cockroach. This chain is Aspartic protease Bla g 2, found in Blattella germanica (German cockroach).